The following is a 241-amino-acid chain: Parkin coregulated gene protein homolog (241 aa).

Microtubule inner protein component of sperm flagellar doublet microtubules. Forms a large molecular chaperone complex containing heat shock proteins 70 and 90 and chaperonin components. Interacts with STIP1, PRKN, GPR37, HSPA8, TCP1/CCT1, CCT2, CCT3, CCT4, CCT5, CCT6A, CCT7 and CCT8. Interacts with MEIG1.

It is found in the cytoplasm. The protein localises to the cytoskeleton. Its subcellular location is the cilium axoneme. The protein resides in the flagellum axoneme. In terms of biological role, microtubule inner protein (MIP) part of the dynein-decorated doublet microtubules (DMTs) in cilia axoneme, which is required for motile cilia beating. Suppresses cell death induced by accumulation of unfolded Pael receptor (Pael-R, a substrate of Parkin). Facilitates the formation of inclusions consisting of Pael-R, molecular chaperones, protein degradation molecules and itself when proteasome is inhibited. May play an important role in the formation of Lewy bodies and protection of dopaminergic neurons against Parkinson disease. The chain is Parkin coregulated gene protein homolog (Pacrg) from Mus musculus (Mouse).